Reading from the N-terminus, the 135-residue chain is Succinate dehydrogenase assembly factor 3, mitochondrial (135 aa).

Positions 73 to 101 (KENSNNNDNYNNNNNDNNNDNNNFINIGQ) are disordered. The segment covering 75-95 (NSNNNDNYNNNNNDNNNDNNN) has biased composition (low complexity).

It belongs to the complex I LYR family. SDHAF3 subfamily. Interacts with the iron-sulfur protein subunit within the SDH catalytic dimer.

The protein resides in the mitochondrion matrix. In terms of biological role, plays an essential role in the assembly of succinate dehydrogenase (SDH), an enzyme complex (also referred to as respiratory complex II) that is a component of both the tricarboxylic acid (TCA) cycle and the mitochondrial electron transport chain, and which couples the oxidation of succinate to fumarate with the reduction of ubiquinone (coenzyme Q) to ubiquinol. Promotes maturation of the iron-sulfur protein subunit of the SDH catalytic dimer, protecting it from the deleterious effects of oxidants. May act together with SDHAF1. In Dictyostelium discoideum (Social amoeba), this protein is Succinate dehydrogenase assembly factor 3, mitochondrial (acn9).